Reading from the N-terminus, the 430-residue chain is Adenylosuccinate synthetase (430 aa).

GTP contacts are provided by residues 12-18 (GDEGKGK) and 40-42 (GHT). The Proton acceptor role is filled by Asp-13. Residues Asp-13 and Gly-40 each contribute to the Mg(2+) site. Residues 13–16 (DEGK), 38–41 (NAGH), Thr-130, Arg-144, Gln-224, Thr-239, and Arg-303 each bind IMP. His-41 functions as the Proton donor in the catalytic mechanism. A substrate-binding site is contributed by 299-305 (TNTGRPR). Residues Arg-305, 331–333 (KLD), and 413–415 (STS) each bind GTP.

The protein belongs to the adenylosuccinate synthetase family. As to quaternary structure, homodimer. Requires Mg(2+) as cofactor.

It localises to the cytoplasm. It carries out the reaction IMP + L-aspartate + GTP = N(6)-(1,2-dicarboxyethyl)-AMP + GDP + phosphate + 2 H(+). It functions in the pathway purine metabolism; AMP biosynthesis via de novo pathway; AMP from IMP: step 1/2. Functionally, plays an important role in the de novo pathway of purine nucleotide biosynthesis. Catalyzes the first committed step in the biosynthesis of AMP from IMP. This is Adenylosuccinate synthetase from Rhodopseudomonas palustris (strain BisB5).